Here is a 345-residue protein sequence, read N- to C-terminus: Arginine-hydroxylase NDUFAF5, mitochondrial (345 aa).

The N-terminal 36 residues, 1–36 (MLRPAGLWRLCRRPWAARVPAENLGRREVTSGVSPR), are a transit peptide targeting the mitochondrion.

Belongs to the methyltransferase superfamily. As to quaternary structure, interacts with NDUFAF8, leading to stabilize NDUFAF5. Interacts with NDUFS7. Interacts with PYURF (via TRM112 domain); the interaction is direct and stabilizes NDUFAF5 protein.

The protein resides in the mitochondrion inner membrane. In terms of biological role, arginine hydroxylase that mediates hydroxylation of 'Arg-111' of NDUFS7 and is involved in the assembly of mitochondrial NADH:ubiquinone oxidoreductase complex (complex I, MT-ND1) at early stages. May also have methyltransferase activity. The sequence is that of Arginine-hydroxylase NDUFAF5, mitochondrial from Homo sapiens (Human).